The chain runs to 441 residues: G-protein coupled receptor family C group 5 member C (441 aa).

An N-terminal signal peptide occupies residues 1 to 23; that stretch reads MAIHKALVMCLGLPLFLFPGAWA. The Extracellular portion of the chain corresponds to 24–50; that stretch reads QGHVPPGCSQGLNPLYYNLCDRSGAWG. Residues 51-71 traverse the membrane as a helical segment; it reads IVLEAVAGAGIVTTFVLTIIL. At 72 to 85 the chain is on the cytoplasmic side; that stretch reads VASLPFVQDTKKRS. The chain crosses the membrane as a helical span at residues 86–106; it reads LLGTQVFFLLGTLGLFCLVFA. The Extracellular segment spans residues 107–120; it reads CVVKPDFSTCASRR. The chain crosses the membrane as a helical span at residues 121–141; that stretch reads FLFGVLFAICFSCLAAHVFAL. Topologically, residues 142–155 are cytoplasmic; the sequence is NFLARKNHGPRGWV. A helical transmembrane segment spans residues 156-176; the sequence is IFTVALLLTLVEVIINTEWLI. At 177 to 208 the chain is on the extracellular side; it reads ITLVRGSGEGGPQGNSSAGWAVASPCAIANMD. A glycan (N-linked (GlcNAc...) asparagine) is linked at N191. A helical transmembrane segment spans residues 209-229; it reads FVMALIYVMLLLLGAFLGAWP. Residues 230 to 241 lie on the Cytoplasmic side of the membrane; that stretch reads ALCGRYKRWRKH. A helical transmembrane segment spans residues 242-262; that stretch reads GVFVLLTTATSVAIWVVWIVM. Residues 263 to 279 are Extracellular-facing; sequence YTYGNKQHNSPTWDDPT. The chain crosses the membrane as a helical span at residues 280 to 300; it reads LAIALAANAWAFVLFYVIPEV. Residues 301–441 lie on the Cytoplasmic side of the membrane; sequence SQVTKSSPEQ…QVFRNPYVWD (141 aa). Residues S344, S383, S403, and S406 each carry the phosphoserine modification. A disordered region spans residues 412-441; the sequence is DMYSAQSHQAATPPKDGKNSQVFRNPYVWD. Y414 bears the Phosphotyrosine mark. T423 is modified (phosphothreonine).

Belongs to the G-protein coupled receptor 3 family. In terms of tissue distribution, expression is highest in the periphery, particularly in the stomach, but also in the kidney, liver, pancreas, and prostate. In brain, levels of expression are generally lower than in the periphery, with the exception of cerebellum, spinal cord, and dorsal root ganglia (DRG).

It is found in the cell membrane. It localises to the cytoplasmic vesicle membrane. This retinoic acid-inducible G-protein coupled receptor provide evidence for a possible interaction between retinoid and G-protein signaling pathways. This is G-protein coupled receptor family C group 5 member C (GPRC5C) from Homo sapiens (Human).